The sequence spans 331 residues: Myc-associated zinc finger protein (331 aa).

Disordered stretches follow at residues 46–65 and 108–131; these read AQSP…APAA and TVDT…SAPA. The span at 117–127 shows a compositional bias: pro residues; it reads PPAPPPPPPAV. C2H2-type zinc fingers lie at residues 177 to 199, 266 to 288, 294 to 316, and 324 to 331; these read YICA…EAIH, HACE…KLSH, YQCP…VRSH, and YNCSHCGK.

Interacts with BPTF. As to expression, ubiquitously expressed.

It is found in the nucleus. Functionally, transcriptional regulator. Acts as a transcriptional activator that binds to purine-rich GAGA sites found in the promoter of many genes including insulin I and II and islet amyloid polypeptide. The sequence is that of Myc-associated zinc finger protein (MAZ) from Mesocricetus auratus (Golden hamster).